The primary structure comprises 130 residues: Small ribosomal subunit protein uS8 (130 aa).

Belongs to the universal ribosomal protein uS8 family. Part of the 30S ribosomal subunit. Contacts proteins S5 and S12.

One of the primary rRNA binding proteins, it binds directly to 16S rRNA central domain where it helps coordinate assembly of the platform of the 30S subunit. This is Small ribosomal subunit protein uS8 from Aliivibrio salmonicida (strain LFI1238) (Vibrio salmonicida (strain LFI1238)).